Reading from the N-terminus, the 572-residue chain is Methionine--tRNA ligase (572 aa).

Positions 11-21 (PYINGIKHLGN) match the 'HIGH' region motif. The Zn(2+) site is built by Cys-143, Cys-146, Cys-156, and Cys-159. A 'KMSKS' region motif is present at residues 346 to 350 (QFSTS). Thr-349 contributes to the ATP binding site.

This sequence belongs to the class-I aminoacyl-tRNA synthetase family. MetG type 1 subfamily. As to quaternary structure, monomer. The cofactor is Zn(2+).

Its subcellular location is the cytoplasm. It catalyses the reaction tRNA(Met) + L-methionine + ATP = L-methionyl-tRNA(Met) + AMP + diphosphate. Its function is as follows. Is required not only for elongation of protein synthesis but also for the initiation of all mRNA translation through initiator tRNA(fMet) aminoacylation. The protein is Methionine--tRNA ligase of Paracoccus denitrificans (strain Pd 1222).